The sequence spans 470 residues: ATP synthase subunit beta (470 aa).

155 to 162 (GGAGVGKT) contacts ATP.

Belongs to the ATPase alpha/beta chains family. In terms of assembly, F-type ATPases have 2 components, CF(1) - the catalytic core - and CF(0) - the membrane proton channel. CF(1) has five subunits: alpha(3), beta(3), gamma(1), delta(1), epsilon(1). CF(0) has three main subunits: a(1), b(2) and c(9-12). The alpha and beta chains form an alternating ring which encloses part of the gamma chain. CF(1) is attached to CF(0) by a central stalk formed by the gamma and epsilon chains, while a peripheral stalk is formed by the delta and b chains.

It is found in the cell membrane. The catalysed reaction is ATP + H2O + 4 H(+)(in) = ADP + phosphate + 5 H(+)(out). Functionally, produces ATP from ADP in the presence of a proton gradient across the membrane. The catalytic sites are hosted primarily by the beta subunits. In Staphylococcus aureus (strain MW2), this protein is ATP synthase subunit beta.